Consider the following 438-residue polypeptide: GTPase Der (438 aa).

EngA-type G domains are found at residues 4 to 168 and 176 to 351; these read PVVA…PAGA and VRIA…GEYR. GTP-binding positions include 10 to 17, 57 to 61, 120 to 123, 182 to 189, 229 to 233, and 294 to 297; these read GRPNVGKS, DTGGI, NKVD, DTAGM, and NKWD. One can recognise a KH-like domain in the interval 352-436; the sequence is RQIPTSMLNR…PVRILFRRRE (85 aa).

The protein belongs to the TRAFAC class TrmE-Era-EngA-EngB-Septin-like GTPase superfamily. EngA (Der) GTPase family. As to quaternary structure, associates with the 50S ribosomal subunit.

GTPase that plays an essential role in the late steps of ribosome biogenesis. This chain is GTPase Der, found in Desulforudis audaxviator (strain MP104C).